The sequence spans 1374 residues: MANTLVGRKRIRKFFGKIREVAEMPNLIEVQKASYDQFLMVDEPEGGRPDEGLQSVFKSVFPISDFSSTALLEFVKYTFEAPKYDVDECRQRGITFAAPLKVTLRLIVFDVDPDTGAKSVKDIKEQDVYMGDMPLMTENGTFIVNGTERVIVSQMHRSPGVFFDHDKGKTHSSGKLLFAARIIPYRGSWLDVEFDAKDIVYARIDRKRKIPVTSLLFALGLDGEEILSTFYNRISYTRDGADWRVPYDAERLKGFKASTDLIDADSGEVVLEAGKKLTARSARQIAEKGVTALRATDEDLIGQYIAEDMVNYKTGEIYAEAGDEISEKLLKGLADVGIEEIPVLDIDHVNVGPYIRNTLAVDKNSNREGALFDIYRVMRPGEPPTLDTAEAMFHSLFFDAERYDLSAVGRVKMNMRLDLDAPDTMRTLRRDDMLAVVKALVDLRDGKGEIDDIDHLGNRRVRSVGELMENQYRLGLLRMERAIKERMSSVDIDTVMPQDLINAKPAAAAVREFFGSSQLSQFMDQTNPLSEVTHKRRLSALGPGGLTRERAGFEVRDVHPTHYGRICPIETPEGPNIGLINSLATFARVNKYGFIETPFRRVKNGVVTDEVVYLSAMEEARYYVAQASAAMDENRRLTEDLVVCRRAGEVIVVAPDRVDLMDVSPKQLVSVAAALIPFLENDDANRALMGSNMQRQAVPLVRADAPFVGTGMESVVARDSGAAIAARRSGIVDQVDATRIVIRATEETDPTKPGVDIYRLQKFQRSNQSTCITQKPLVRVGEQVGKGDIIADGPSTEFGELALGRNVLVAFMPWNGYNFEDSILLSERIVKDDVFTSIHIEEFEVMARDTKLGPEEITRDIPNVSEEALKNLDEAGIVYIGAEVHAGDILVGKITPKGESPMTPEEKLLRAIFGEKASDVRDTSLRVPPGVTGTIVEVRVFNRHGVDKDERAQAIEREEIERLAKDRDDEQAILDRNTYARLADVLVGQAPVAGPKGFKKDTVLTREGLADYPRSQWWQFAVVDDRLMTEIEAMQKQYDESKKRLEQRFLDKVEKLQRGDELPPGVMKMVKVFVAVKRKIQPGDKMAGRHGNKGVVSRIVPIEDMPFLEDGTHADIVLNPLGVPSRMNVGQILETHLGWAAAGLGRQVAQAVDAYLRSHDATPLREQMRRIYSEAELDGLSDQDLAEIGNNLRRGVPMATPVFNGAKEADIEAMLEMAGLDRSGQSTLYDGRTGEPFDRKVTVGYIYMLKLHHLVDDKIHARSIGPYSLVTQQPLGGKAQFGGQRFGEMEVWALEAYGAAYTLQEMLTVKSDDVAGRTKVYEAIVRGDDTFEAGIPESFNVLVKEMRSLGLNVELISSKRAANDQLEAPPEAAE.

It belongs to the RNA polymerase beta chain family. As to quaternary structure, the RNAP catalytic core consists of 2 alpha, 1 beta, 1 beta' and 1 omega subunit. When a sigma factor is associated with the core the holoenzyme is formed, which can initiate transcription.

It catalyses the reaction RNA(n) + a ribonucleoside 5'-triphosphate = RNA(n+1) + diphosphate. Its function is as follows. DNA-dependent RNA polymerase catalyzes the transcription of DNA into RNA using the four ribonucleoside triphosphates as substrates. The polypeptide is DNA-directed RNA polymerase subunit beta (Methylobacterium nodulans (strain LMG 21967 / CNCM I-2342 / ORS 2060)).